Reading from the N-terminus, the 257-residue chain is UPF0246 protein ASA_3634 (257 aa).

It belongs to the UPF0246 family.

This chain is UPF0246 protein ASA_3634, found in Aeromonas salmonicida (strain A449).